A 456-amino-acid chain; its full sequence is N(6)-adenosine-methyltransferase non-catalytic subunit METTL14 (456 aa).

The interval 43 to 74 (EIAETRETSRASYDTSAAVSKRKLPEEGKADE) is disordered. Residues 65–74 (KLPEEGKADE) are compositionally biased toward basic and acidic residues. Interaction with METTL3 stretches follow at residues 135–136 (RD) and 237–238 (SG). The positively charged region required for RNA-binding stretch occupies residues 245-254 (RMCLRKWGFR). Interaction with METTL3 stretches follow at residues 255–258 (RSED) and 278–287 (KAIFQRTKEH). Residues 297 to 298 (HR) are positively charged region required for RNA-binding. The segment at 308–312 (NVDID) is interaction with METTL3. The tract at residues 395-456 (LRPKTPPPKS…GPHRGVFAPR (62 aa)) is disordered. Positions 410–421 (ASRGGGRGGASA) are enriched in gly residues. The span at 423–441 (RGERGRERNRGSFRGDRGN) shows a compositional bias: basic and acidic residues.

This sequence belongs to the MT-A70-like family. Heterodimer; heterodimerizes with mettl3 to form an antiparallel heterodimer that constitutes an active methyltransferase. Component of the WMM complex, a N6-methyltransferase complex composed of a catalytic subcomplex, named MAC, and of an associated subcomplex, named MACOM. The MAC subcomplex is composed of mettl3 and mettl14.

Its subcellular location is the nucleus. Functionally, the METTL3-METTL14 heterodimer forms a N6-methyltransferase complex that methylates adenosine residues at the N(6) position of some mRNAs and regulates the circadian clock, differentiation of embryonic stem cells and cortical neurogenesis. In the heterodimer formed with mettl3, mettl14 constitutes the RNA-binding scaffold that recognizes the substrate rather than the catalytic core. N6-methyladenosine (m6A), which takes place at the 5'-[AG]GAC-3' consensus sites of some mRNAs, plays a role in mRNA stability and processing. The polypeptide is N(6)-adenosine-methyltransferase non-catalytic subunit METTL14 (mettl14) (Xenopus laevis (African clawed frog)).